Consider the following 511-residue polypeptide: Cytochrome P450 monooxygenase cypX (511 aa).

The helical transmembrane segment at Leu18–Ile38 threads the bilayer. N-linked (GlcNAc...) asparagine glycans are attached at residues Asn162 and Asn407. A heme-binding site is contributed by Cys454.

It belongs to the cytochrome P450 family. It depends on heme as a cofactor.

The protein localises to the membrane. The protein operates within mycotoxin biosynthesis. In terms of biological role, cytochrome P450 monooxygenase; part of the fragmented gene cluster that mediates the biosynthesis of dothistromin (DOTH), a polyketide toxin very similar in structure to the aflatoxin precursor, versicolorin B. The first step of the pathway is the conversion of acetate to norsolorinic acid (NOR) and requires the fatty acid synthase subunits hexA and hexB, as well as the polyketide synthase pksA. PksA combines a hexanoyl starter unit and 7 malonyl-CoA extender units to synthesize the precursor NOR. The hexanoyl starter unit is provided to the acyl-carrier protein (ACP) domain by the fungal fatty acid synthase hexA/hexB. The second step is the conversion of NOR to averantin (AVN) and requires the norsolorinic acid ketoreductase nor1, which catalyzes the dehydration of norsolorinic acid to form (1'S)-averantin. The cytochrome P450 monooxygenase avnA then catalyzes the hydroxylation of AVN to 5'hydroxyaverantin (HAVN). The next step is performed by adhA that transforms HAVN to averufin (AVF). Averufin might then be converted to hydroxyversicolorone by cypX and avfA. Hydroxyversicolorone is further converted versiconal hemiacetal acetate (VHA) by moxY. VHA is then the substrate for the versiconal hemiacetal acetate esterase est1 to yield versiconal (VAL). Versicolorin B synthase vbsA then converts VAL to versicolorin B (VERB) by closing the bisfuran ring. Then, the activity of the versicolorin B desaturase verB leads to versicolorin A (VERA). DotB, a predicted chloroperoxidase, may perform epoxidation of the A-ring of VERA. Alternatively, a cytochrome P450, such as cypX or avnA could catalyze this step. It is also possible that another, uncharacterized, cytochrome P450 enzyme is responsible for this step. Opening of the epoxide could potentially be achieved by the epoxide hydrolase epoA. However, epoA seems not to be required for DOTH biosynthesis, but other epoxide hydrolases may have the ability to complement this hydrolysis. Alternatively, opening of the epoxide ring could be achieved non-enzymatically. The next step is the deoxygenation of ring A to yield the 5,8-dihydroxyanthraquinone which is most likely catalyzed by the NADPH dehydrogenase encoded by ver1. The last stages of DOTH biosynthesis are proposed to involve hydroxylation of the bisfuran. OrdB and norB might have oxidative roles here. An alternative possibility is that cytochrome P450 monoogenases such as avnA and cypX might perform these steps in addition to previously proposed steps. This Dothistroma septosporum (Red band needle blight fungus) protein is Cytochrome P450 monooxygenase cypX.